The sequence spans 708 residues: GID complex associated protein 12 (708 aa).

Low complexity predominate over residues 381–396 (SSRRNSSFSTASSEPR). The interval 381 to 403 (SSRRNSSFSTASSEPRPLSRRRR) is disordered.

In terms of assembly, interacts with core components of the GID/CTLH ubiquitin ligase complex. GID12 binds both the substrate receptor GID4 and the tip of GID5 in the scaffolding module, sealing GID4 onto the scaffold.

Functionally, regulator of the GID E3 ligase complex. Modulates both assembly of the substrate receptor GID4 into the GID E3 ligase complex and its activity toward its substrates. GID12-binding remodels the N-degron binding pocket in the GID(SR4) complex, and could limit substrate accessibility of a bulky substrate to a ubiquitynation active site, thereby stabilizing gluconeogenic enzyme substrates. Involved in actin patch formation. This Saccharomyces cerevisiae (strain ATCC 204508 / S288c) (Baker's yeast) protein is GID complex associated protein 12.